A 277-amino-acid chain; its full sequence is Probable endonuclease 4 (277 aa).

Positions 67, 107, 141, 173, 176, 207, 220, 222, and 252 each coordinate Zn(2+).

The protein belongs to the AP endonuclease 2 family. It depends on Zn(2+) as a cofactor.

The catalysed reaction is Endonucleolytic cleavage to 5'-phosphooligonucleotide end-products.. In terms of biological role, endonuclease IV plays a role in DNA repair. It cleaves phosphodiester bonds at apurinic or apyrimidinic (AP) sites, generating a 3'-hydroxyl group and a 5'-terminal sugar phosphate. This chain is Probable endonuclease 4, found in Finegoldia magna (strain ATCC 29328 / DSM 20472 / WAL 2508) (Peptostreptococcus magnus).